Here is a 598-residue protein sequence, read N- to C-terminus: Aspartate--tRNA ligase (598 aa).

L-aspartate is bound at residue E173. The segment at 197-200 (QLFK) is aspartate. R219 is an L-aspartate binding site. Residues 219 to 221 (RDE) and Q228 contribute to the ATP site. Residue H449 coordinates L-aspartate. E483 serves as a coordination point for ATP. R490 contacts L-aspartate. ATP is bound at residue 535–538 (GLDR).

It belongs to the class-II aminoacyl-tRNA synthetase family. Type 1 subfamily. Homodimer.

Its subcellular location is the cytoplasm. The enzyme catalyses tRNA(Asp) + L-aspartate + ATP = L-aspartyl-tRNA(Asp) + AMP + diphosphate. Its function is as follows. Catalyzes the attachment of L-aspartate to tRNA(Asp) in a two-step reaction: L-aspartate is first activated by ATP to form Asp-AMP and then transferred to the acceptor end of tRNA(Asp). The protein is Aspartate--tRNA ligase of Shewanella halifaxensis (strain HAW-EB4).